Here is a 195-residue protein sequence, read N- to C-terminus: Molybdenum cofactor guanylyltransferase (195 aa).

GTP is bound by residues 12–14 (LAG), K25, N53, D70, and D100. Mg(2+) is bound at residue D100.

This sequence belongs to the MobA family. In terms of assembly, monomer. Requires Mg(2+) as cofactor.

The protein localises to the cytoplasm. The catalysed reaction is Mo-molybdopterin + GTP + H(+) = Mo-molybdopterin guanine dinucleotide + diphosphate. Functionally, transfers a GMP moiety from GTP to Mo-molybdopterin (Mo-MPT) cofactor (Moco or molybdenum cofactor) to form Mo-molybdopterin guanine dinucleotide (Mo-MGD) cofactor. The sequence is that of Molybdenum cofactor guanylyltransferase from Vibrio campbellii (strain ATCC BAA-1116).